Reading from the N-terminus, the 130-residue chain is Glycine cleavage system H protein (130 aa).

The Lipoyl-binding domain occupies 24–106 (TATVGITDFA…YGDGWMFKVK (83 aa)). K65 is subject to N6-lipoyllysine.

Belongs to the GcvH family. As to quaternary structure, the glycine cleavage system is composed of four proteins: P, T, L and H. It depends on (R)-lipoate as a cofactor.

Its function is as follows. The glycine cleavage system catalyzes the degradation of glycine. The H protein shuttles the methylamine group of glycine from the P protein to the T protein. This Marinobacter nauticus (strain ATCC 700491 / DSM 11845 / VT8) (Marinobacter aquaeolei) protein is Glycine cleavage system H protein.